The chain runs to 316 residues: MTKEFHHITVLLHETVDMLDIKPDGIYVDATLGGAGHSSYLLSKLNDNGHLYCFDQDQKAIDNAQVFLKSYVDRGMVTFIKANFRHLKSELNALGVTEIDGILYDLGVSSPQLDERERGFSYKQDAPLDMRMDSDAALTAYHVVNDYPFQDLVRIFFKYGEDKFSKQIARKIEQARAIKPIETTAELAEIIKSAKPAKELKKKGHPAKQIFQAIRIEVNDELGAADESIQEAMTMLALNGRISVITFHSLEDRLTKQLFKEASTVDVPKGIPFIPEDMQPKFELVTRKPILPSQEELLANNRAHSAKLRVARKVRM.

S-adenosyl-L-methionine is bound by residues 35–37 (AGH), aspartate 55, phenylalanine 84, aspartate 105, and glutamine 112.

It belongs to the methyltransferase superfamily. RsmH family.

It localises to the cytoplasm. It catalyses the reaction cytidine(1402) in 16S rRNA + S-adenosyl-L-methionine = N(4)-methylcytidine(1402) in 16S rRNA + S-adenosyl-L-homocysteine + H(+). In terms of biological role, specifically methylates the N4 position of cytidine in position 1402 (C1402) of 16S rRNA. The polypeptide is Ribosomal RNA small subunit methyltransferase H (Streptococcus uberis (strain ATCC BAA-854 / 0140J)).